We begin with the raw amino-acid sequence, 403 residues long: Phosphoglycerate kinase (403 aa).

Substrate contacts are provided by residues 21 to 23 (DFN), arginine 36, 59 to 62 (HVGR), arginine 119, and arginine 154. ATP contacts are provided by residues lysine 207, glycine 299, glutamate 330, and 357 to 360 (GGDA).

It belongs to the phosphoglycerate kinase family. Monomer.

The protein localises to the cytoplasm. The enzyme catalyses (2R)-3-phosphoglycerate + ATP = (2R)-3-phospho-glyceroyl phosphate + ADP. It functions in the pathway carbohydrate degradation; glycolysis; pyruvate from D-glyceraldehyde 3-phosphate: step 2/5. In Chlamydia trachomatis serovar D (strain ATCC VR-885 / DSM 19411 / UW-3/Cx), this protein is Phosphoglycerate kinase (pgk).